A 213-amino-acid polypeptide reads, in one-letter code: Probable nicotinate-nucleotide adenylyltransferase (213 aa).

The protein belongs to the NadD family.

The catalysed reaction is nicotinate beta-D-ribonucleotide + ATP + H(+) = deamido-NAD(+) + diphosphate. It participates in cofactor biosynthesis; NAD(+) biosynthesis; deamido-NAD(+) from nicotinate D-ribonucleotide: step 1/1. Catalyzes the reversible adenylation of nicotinate mononucleotide (NaMN) to nicotinic acid adenine dinucleotide (NaAD). This Salmonella gallinarum (strain 287/91 / NCTC 13346) protein is Probable nicotinate-nucleotide adenylyltransferase.